A 730-amino-acid chain; its full sequence is uncharacterized protein (730 aa).

The span at 615 to 625 shows a compositional bias: basic and acidic residues; it reads FDKENSFDPSD. Disordered regions lie at residues 615-667 and 684-730; these read FDKE…SSFS and KSGS…FGKI. Composition is skewed to low complexity over residues 653 to 667 and 684 to 701; these read SSSS…SSFS and KSGS…NSSS. A compositionally biased stretch (basic residues) spans 713–723; the sequence is KKKKKKKKKKS.

This is an uncharacterized protein from Saccharomyces cerevisiae (strain ATCC 204508 / S288c) (Baker's yeast).